We begin with the raw amino-acid sequence, 277 residues long: Diaminopimelate epimerase (277 aa).

Substrate-binding residues include N11 and N62. Catalysis depends on C71, which acts as the Proton donor. Substrate is bound by residues 72–73 (GN), N160, N193, and 211–212 (ER). C220 (proton acceptor) is an active-site residue. A substrate-binding site is contributed by 221–222 (GT).

The protein belongs to the diaminopimelate epimerase family. Homodimer.

The protein resides in the cytoplasm. The catalysed reaction is (2S,6S)-2,6-diaminopimelate = meso-2,6-diaminopimelate. The protein operates within amino-acid biosynthesis; L-lysine biosynthesis via DAP pathway; DL-2,6-diaminopimelate from LL-2,6-diaminopimelate: step 1/1. Catalyzes the stereoinversion of LL-2,6-diaminopimelate (L,L-DAP) to meso-diaminopimelate (meso-DAP), a precursor of L-lysine. The chain is Diaminopimelate epimerase from Methanococcus maripaludis (strain C6 / ATCC BAA-1332).